The chain runs to 120 residues: Ig heavy chain V region AC38 15.3 (120 aa).

Positions 1 to 98 are v segment; that stretch reads QVQLLQPGTE…EDSAVYYCAR (98 aa). Cys-22 and Cys-96 form a disulfide bridge. Positions 99 to 105 are d segment; the sequence is WDYEGDR. The interval 106 to 120 is j segment; the sequence is YFDVWGTGTTVTVSS.

This chain is Ig heavy chain V region AC38 15.3, found in Mus musculus (Mouse).